A 90-amino-acid polypeptide reads, in one-letter code: Large ribosomal subunit protein bL27 (90 aa).

A disordered region spans residues Met1–Leu21.

It belongs to the bacterial ribosomal protein bL27 family.

This chain is Large ribosomal subunit protein bL27, found in Metamycoplasma arthritidis (strain 158L3-1) (Mycoplasma arthritidis).